Reading from the N-terminus, the 416-residue chain is MNMALISLAIDYKKSPIEVRSEFALSGLDVSMLYRSILAIDNVVHAVILSTCNRTEVYLEISNLRVVDDILVWWQGYVRNPNYKIKDYFKLRQGTEVIMHLMKLACGLESMVLGEPQILGQVKDSYTLSKKNHAIGKELDRVFQKVFATAKRVRSETRIGYCPVSVAFSAITLAKRQLDNISSKNVLIIGAGQTGELLFRHVTALAPKQIMLANRTIEKAQKITSVFRNASAHYLSELPQLIKKADIIIAAVNVLEYIVTCKYVGDKPRVFIDISIPQALDPKLGELEQNVYYCVDDINAVIEDNKDKRKYESSKAQKIIVKSLEEYLEKEKAIISNSAIKELFQKADGLVDLSLEKSLAKIRNGKDAEEIIKRFAYEIKKKVLHYPVVGMKEASKQGRSDCLVCMKRMFGLNVEK.

Substrate-binding positions include 51 to 54 (TCNR), S110, 115 to 117 (EPQ), and Q121. The Nucleophile role is filled by C52. Residue 190–195 (GAGQTG) coordinates NADP(+).

It belongs to the glutamyl-tRNA reductase family. Homodimer.

It carries out the reaction (S)-4-amino-5-oxopentanoate + tRNA(Glu) + NADP(+) = L-glutamyl-tRNA(Glu) + NADPH + H(+). Its pathway is porphyrin-containing compound metabolism; protoporphyrin-IX biosynthesis; 5-aminolevulinate from L-glutamyl-tRNA(Glu): step 1/2. Its function is as follows. Catalyzes the NADPH-dependent reduction of glutamyl-tRNA(Glu) to glutamate 1-semialdehyde (GSA). This chain is Glutamyl-tRNA reductase, found in Francisella tularensis subsp. holarctica (strain OSU18).